Consider the following 714-residue polypeptide: DNA ligase (714 aa).

NAD(+) contacts are provided by residues 48–52, 97–98, and Glu-129; these read DADYD and SL. Residue Lys-131 is the N6-AMP-lysine intermediate of the active site. 4 residues coordinate NAD(+): Arg-152, Glu-189, Lys-307, and Lys-331. Residues Cys-436, Cys-439, Cys-454, and Cys-460 each contribute to the Zn(2+) site. Residues 637–714 form the BRCT domain; sequence KQDTAVAGKT…TEDEWLALIG (78 aa).

Belongs to the NAD-dependent DNA ligase family. LigA subfamily. The cofactor is Mg(2+). Mn(2+) is required as a cofactor.

The enzyme catalyses NAD(+) + (deoxyribonucleotide)n-3'-hydroxyl + 5'-phospho-(deoxyribonucleotide)m = (deoxyribonucleotide)n+m + AMP + beta-nicotinamide D-nucleotide.. Its function is as follows. DNA ligase that catalyzes the formation of phosphodiester linkages between 5'-phosphoryl and 3'-hydroxyl groups in double-stranded DNA using NAD as a coenzyme and as the energy source for the reaction. It is essential for DNA replication and repair of damaged DNA. The chain is DNA ligase from Rhodopseudomonas palustris (strain BisB5).